Consider the following 458-residue polypeptide: UDP-N-acetylmuramate--L-alanine ligase (458 aa).

Residue 118 to 124 (GTHGKTT) coordinates ATP.

Belongs to the MurCDEF family.

Its subcellular location is the cytoplasm. The catalysed reaction is UDP-N-acetyl-alpha-D-muramate + L-alanine + ATP = UDP-N-acetyl-alpha-D-muramoyl-L-alanine + ADP + phosphate + H(+). Its pathway is cell wall biogenesis; peptidoglycan biosynthesis. In terms of biological role, cell wall formation. This chain is UDP-N-acetylmuramate--L-alanine ligase, found in Clostridium botulinum (strain Okra / Type B1).